Consider the following 592-residue polypeptide: V-type ATP synthase alpha chain (592 aa).

232-239 serves as a coordination point for ATP; it reads GPFGAGKT.

It belongs to the ATPase alpha/beta chains family.

It carries out the reaction ATP + H2O + 4 H(+)(in) = ADP + phosphate + 5 H(+)(out). Functionally, produces ATP from ADP in the presence of a proton gradient across the membrane. The V-type alpha chain is a catalytic subunit. This Clostridium botulinum (strain Eklund 17B / Type B) protein is V-type ATP synthase alpha chain.